The sequence spans 403 residues: Tyrosine--tRNA ligase (403 aa).

The 'HIGH' region signature appears at 42-51 (PTAPDLHLGH). The short motif at 226–230 (KMSKS) is the 'KMSKS' region element. Lysine 229 is a binding site for ATP. Residues 339–400 (LRIASLLTAA…GKRNFARVAL (62 aa)) enclose the S4 RNA-binding domain.

The protein belongs to the class-I aminoacyl-tRNA synthetase family. TyrS type 2 subfamily. In terms of assembly, homodimer.

It is found in the cytoplasm. The catalysed reaction is tRNA(Tyr) + L-tyrosine + ATP = L-tyrosyl-tRNA(Tyr) + AMP + diphosphate + H(+). Its function is as follows. Catalyzes the attachment of tyrosine to tRNA(Tyr) in a two-step reaction: tyrosine is first activated by ATP to form Tyr-AMP and then transferred to the acceptor end of tRNA(Tyr). The protein is Tyrosine--tRNA ligase of Xanthomonas campestris pv. campestris (strain ATCC 33913 / DSM 3586 / NCPPB 528 / LMG 568 / P 25).